The chain runs to 215 residues: ER lumen protein-retaining receptor A (215 aa).

At 1–2 the chain is on the lumenal side; it reads MN. The helical transmembrane segment at 3-21 threads the bilayer; the sequence is IFRFAGDMSHLISVLILLL. Residues 22-35 lie on the Cytoplasmic side of the membrane; that stretch reads KIYATKSCAGISLK. Residues 36-53 form a helical membrane-spanning segment; the sequence is TQELYALVFLTRYLDLFT. The Lumenal portion of the chain corresponds to 54 to 61; sequence DYVSLYNS. The helical transmembrane segment at 62 to 82 threads the bilayer; it reads IMKIVFIASSLAIVWCMRRHP. Over 83–98 the chain is Cytoplasmic; it reads LVRRSYDKDLDTFRHQ. A helical membrane pass occupies residues 99 to 112; sequence YVVLACFVLGLILN. Topologically, residues 113 to 119 are lumenal; sequence EKFTVQE. The helical transmembrane segment at 120 to 139 threads the bilayer; it reads VFWAFSIYLEAVAILPQLVL. The Cytoplasmic portion of the chain corresponds to 140-151; the sequence is LQRSGNVDNLTG. Residues 152 to 170 traverse the membrane as a helical segment; it reads QYVVFLGAYRGLYIINWIY. Residues 171 to 181 lie on the Lumenal side of the membrane; sequence RYFTEDHFTRW. A helical membrane pass occupies residues 182–202; that stretch reads IACVSGLVQTALYADFFYYYY. At 203-215 the chain is on the cytoplasmic side; sequence ISWKTNTKLKLPA.

This sequence belongs to the ERD2 family.

It is found in the endoplasmic reticulum membrane. Required for the retention of luminal endoplasmic reticulum proteins. Determines the specificity of the luminal ER protein retention system. Also required for normal vesicular traffic through the Golgi. This receptor recognizes H-D-E-L. The chain is ER lumen protein-retaining receptor A (ERD2A) from Arabidopsis thaliana (Mouse-ear cress).